The following is a 734-amino-acid chain: Photosystem I P700 chlorophyll a apoprotein A2 (734 aa).

A run of 8 helical transmembrane segments spans residues 46 to 69 (IFSSHFGHIAIIFLWTSGNLFHVA), 135 to 158 (LYNGSLFLLILSAIMLFAGWLHLQ), 175 to 199 (LNHHLSGLFGLSSLAWTGHLIHVAI), 273 to 291 (MAHHHLAIAIVFIIAGHMY), 330 to 353 (LHMQLGLALASLGVITSLVAQHMY), 369 to 395 (AALYTHHQYIAGFLMVGAFAHGAIFFI), 417 to 439 (AIISHLSWVSLFLGFHTLGLYIH), and 517 to 535 (FLVHHAIALGLHTTTLILV). Residues C559 and C568 each contribute to the [4Fe-4S] cluster site. Transmembrane regions (helical) follow at residues 575–596 (AFYLSVFWMLNTIGWVTFYWHW) and 643–665 (LSVWAWMFLFGHLVWATGFMFLI). H654, M662, and Y670 together coordinate chlorophyll a. Position 671 (W671) interacts with phylloquinone. The helical transmembrane segment at 707–727 (LVGLVHFSVGYILTYAAFVIA) threads the bilayer.

It belongs to the PsaA/PsaB family. The PsaA/B heterodimer binds the P700 chlorophyll special pair and subsequent electron acceptors. PSI consists of a core antenna complex that captures photons, and an electron transfer chain that converts photonic excitation into a charge separation. The eukaryotic PSI reaction center is composed of at least 11 subunits. P700 is a chlorophyll a/chlorophyll a' dimer, A0 is one or more chlorophyll a, A1 is one or both phylloquinones and FX is a shared 4Fe-4S iron-sulfur center. is required as a cofactor.

The protein resides in the plastid. Its subcellular location is the chloroplast thylakoid membrane. It carries out the reaction reduced [plastocyanin] + hnu + oxidized [2Fe-2S]-[ferredoxin] = oxidized [plastocyanin] + reduced [2Fe-2S]-[ferredoxin]. Its function is as follows. PsaA and PsaB bind P700, the primary electron donor of photosystem I (PSI), as well as the electron acceptors A0, A1 and FX. PSI is a plastocyanin/cytochrome c6-ferredoxin oxidoreductase, converting photonic excitation into a charge separation, which transfers an electron from the donor P700 chlorophyll pair to the spectroscopically characterized acceptors A0, A1, FX, FA and FB in turn. Oxidized P700 is reduced on the lumenal side of the thylakoid membrane by plastocyanin or cytochrome c6. The sequence is that of Photosystem I P700 chlorophyll a apoprotein A2 from Gracilaria tenuistipitata var. liui (Red alga).